The following is a 92-amino-acid chain: Small ribosomal subunit protein uS19 (92 aa).

Belongs to the universal ribosomal protein uS19 family.

Its function is as follows. Protein S19 forms a complex with S13 that binds strongly to the 16S ribosomal RNA. In Nitrobacter hamburgensis (strain DSM 10229 / NCIMB 13809 / X14), this protein is Small ribosomal subunit protein uS19.